The chain runs to 623 residues: NAD-dependent malic enzyme, mitochondrial (623 aa).

A mitochondrion-targeting transit peptide spans 1–31 (MLVLCSRSRLTSSLIRRLKDQIANVSNHRSF). Residues Arg-88 and Arg-122 each coordinate fumarate. Residue Ser-143 is the Proton donor of the active site. Arg-196 serves as a coordination point for (S)-malate. NAD(+) is bound at residue Arg-196. Lys-214 (proton acceptor) is an active-site residue. Positions 285 and 286 each coordinate a divalent metal cation. NAD(+) is bound at residue Asn-289. Position 309 (Asp-309) interacts with a divalent metal cation. Residue Ala-345 participates in NAD(+) binding. Residues Asn-464 and Asn-509 each contribute to the (S)-malate site.

It belongs to the malic enzymes family. Heterodimer of two related subunits. The cofactor is Mg(2+). Requires Mn(2+) as cofactor.

It is found in the mitochondrion matrix. It catalyses the reaction (S)-malate + NAD(+) = pyruvate + CO2 + NADH. It functions in the pathway photosynthesis; C4 acid pathway. The sequence is that of NAD-dependent malic enzyme, mitochondrial from Amaranthus hypochondriacus (Prince-of-Wales feather).